The primary structure comprises 153 residues: IAA acetyltransferase (153 aa).

The 150-residue stretch at 4-153 (VTIARESPLQ…PLSLFMEKPL (150 aa)) folds into the N-acetyltransferase domain.

Functionally, participates in the tryptophan-dependent indole-3-acetic acid production, which is a phytohormone released by A.brasilense. This is IAA acetyltransferase from Azospirillum brasilense.